The primary structure comprises 451 residues: Signal recognition particle 54 kDa protein (451 aa).

GTP contacts are provided by residues 105–112 (GVQGTGKT), 187–191 (DTAGR), and 247–250 (TKMD).

It belongs to the GTP-binding SRP family. SRP54 subfamily. Part of the signal recognition particle protein translocation system, which is composed of SRP and FtsY. Archaeal SRP consists of a 7S RNA molecule of 300 nucleotides and two protein subunits: SRP54 and SRP19.

It localises to the cytoplasm. The enzyme catalyses GTP + H2O = GDP + phosphate + H(+). Its function is as follows. Involved in targeting and insertion of nascent membrane proteins into the cytoplasmic membrane. Binds to the hydrophobic signal sequence of the ribosome-nascent chain (RNC) as it emerges from the ribosomes. The SRP-RNC complex is then targeted to the cytoplasmic membrane where it interacts with the SRP receptor FtsY. This chain is Signal recognition particle 54 kDa protein, found in Acidianus ambivalens (Desulfurolobus ambivalens).